The sequence spans 459 residues: Bifunctional protein GlmU (459 aa).

The tract at residues 1 to 230 is pyrophosphorylase; the sequence is MVKRYAVILA…FDETIGINDR (230 aa). UDP-N-acetyl-alpha-D-glucosamine-binding positions include 9 to 12, Lys-23, Gln-73, and 78 to 79; these read LAAG and GT. Asp-103 contributes to the Mg(2+) binding site. 4 residues coordinate UDP-N-acetyl-alpha-D-glucosamine: Gly-140, Glu-155, Asn-170, and Asn-228. Residue Asn-228 participates in Mg(2+) binding. Residues 231–251 form a linker region; that stretch reads IALAEAERIMRDRICRQHMKN. Residues 252-459 are N-acetyltransferase; it reads GVTIIDPACT…VDRLRGKKKS (208 aa). UDP-N-acetyl-alpha-D-glucosamine is bound by residues Arg-333 and Lys-351. His-363 (proton acceptor) is an active-site residue. 2 residues coordinate UDP-N-acetyl-alpha-D-glucosamine: Tyr-366 and Asn-377. Acetyl-CoA contacts are provided by residues 386–387, Ala-423, and Arg-440; that span reads NY.

In the N-terminal section; belongs to the N-acetylglucosamine-1-phosphate uridyltransferase family. This sequence in the C-terminal section; belongs to the transferase hexapeptide repeat family. As to quaternary structure, homotrimer. It depends on Mg(2+) as a cofactor.

The protein resides in the cytoplasm. The enzyme catalyses alpha-D-glucosamine 1-phosphate + acetyl-CoA = N-acetyl-alpha-D-glucosamine 1-phosphate + CoA + H(+). The catalysed reaction is N-acetyl-alpha-D-glucosamine 1-phosphate + UTP + H(+) = UDP-N-acetyl-alpha-D-glucosamine + diphosphate. The protein operates within nucleotide-sugar biosynthesis; UDP-N-acetyl-alpha-D-glucosamine biosynthesis; N-acetyl-alpha-D-glucosamine 1-phosphate from alpha-D-glucosamine 6-phosphate (route II): step 2/2. It participates in nucleotide-sugar biosynthesis; UDP-N-acetyl-alpha-D-glucosamine biosynthesis; UDP-N-acetyl-alpha-D-glucosamine from N-acetyl-alpha-D-glucosamine 1-phosphate: step 1/1. Its pathway is bacterial outer membrane biogenesis; LPS lipid A biosynthesis. Its function is as follows. Catalyzes the last two sequential reactions in the de novo biosynthetic pathway for UDP-N-acetylglucosamine (UDP-GlcNAc). The C-terminal domain catalyzes the transfer of acetyl group from acetyl coenzyme A to glucosamine-1-phosphate (GlcN-1-P) to produce N-acetylglucosamine-1-phosphate (GlcNAc-1-P), which is converted into UDP-GlcNAc by the transfer of uridine 5-monophosphate (from uridine 5-triphosphate), a reaction catalyzed by the N-terminal domain. The sequence is that of Bifunctional protein GlmU from Geobacillus thermodenitrificans (strain NG80-2).